A 246-amino-acid chain; its full sequence is Hydroxyacylglutathione hydrolase (246 aa).

The Zn(2+) site is built by H58, H60, D62, H63, H117, D137, and H175.

Belongs to the metallo-beta-lactamase superfamily. Glyoxalase II family. In terms of assembly, monomer. The cofactor is Zn(2+).

The enzyme catalyses an S-(2-hydroxyacyl)glutathione + H2O = a 2-hydroxy carboxylate + glutathione + H(+). It functions in the pathway secondary metabolite metabolism; methylglyoxal degradation; (R)-lactate from methylglyoxal: step 2/2. Its function is as follows. Thiolesterase that catalyzes the hydrolysis of S-D-lactoyl-glutathione to form glutathione and D-lactic acid. This chain is Hydroxyacylglutathione hydrolase, found in Prochlorococcus marinus (strain MIT 9312).